Reading from the N-terminus, the 108-residue chain is Nucleoid-associated protein Avin_19840 (108 aa).

Belongs to the YbaB/EbfC family. As to quaternary structure, homodimer.

Its subcellular location is the cytoplasm. The protein resides in the nucleoid. In terms of biological role, binds to DNA and alters its conformation. May be involved in regulation of gene expression, nucleoid organization and DNA protection. This is Nucleoid-associated protein Avin_19840 from Azotobacter vinelandii (strain DJ / ATCC BAA-1303).